The following is a 509-amino-acid chain: Lanosterol 14-alpha demethylase (509 aa).

A helical membrane pass occupies residues 30–50 (GNLLSMLLIACAFTLSLVYLF). Cysteine 455 provides a ligand contact to heme.

The protein belongs to the cytochrome P450 family. Requires heme as cofactor. Post-translationally, ubiquitinated by MARCHF6, leading to proteasomal degradation.

The protein localises to the endoplasmic reticulum membrane. It localises to the microsome membrane. It carries out the reaction a 14alpha-methyl steroid + 3 reduced [NADPH--hemoprotein reductase] + 3 O2 = a Delta(14) steroid + formate + 3 oxidized [NADPH--hemoprotein reductase] + 4 H2O + 4 H(+). The enzyme catalyses lanosterol + 3 reduced [NADPH--hemoprotein reductase] + 3 O2 = 4,4-dimethyl-5alpha-cholesta-8,14,24-trien-3beta-ol + formate + 3 oxidized [NADPH--hemoprotein reductase] + 4 H2O + 4 H(+). The catalysed reaction is 24,25-dihydrolanosterol + 3 reduced [NADPH--hemoprotein reductase] + 3 O2 = 4,4-dimethyl-8,14-cholestadien-3beta-ol + formate + 3 oxidized [NADPH--hemoprotein reductase] + 4 H2O + 4 H(+). It catalyses the reaction a 14alpha-methyl steroid + reduced [NADPH--hemoprotein reductase] + O2 = a 14alpha-hydroxymethyl steroid + oxidized [NADPH--hemoprotein reductase] + H2O + H(+). It carries out the reaction a 14alpha-hydroxymethyl steroid + reduced [NADPH--hemoprotein reductase] + O2 = a 14alpha-formyl steroid + oxidized [NADPH--hemoprotein reductase] + 2 H2O + H(+). The enzyme catalyses a 14alpha-formyl steroid + reduced [NADPH--hemoprotein reductase] + O2 = a Delta(14) steroid + formate + oxidized [NADPH--hemoprotein reductase] + H2O + 2 H(+). The catalysed reaction is lanosterol + reduced [NADPH--hemoprotein reductase] + O2 = 32-hydroxylanosterol + oxidized [NADPH--hemoprotein reductase] + H2O + H(+). It catalyses the reaction 32-hydroxylanosterol + reduced [NADPH--hemoprotein reductase] + O2 = 32-oxolanosterol + oxidized [NADPH--hemoprotein reductase] + 2 H2O + H(+). It carries out the reaction 32-oxolanosterol + reduced [NADPH--hemoprotein reductase] + O2 = 4,4-dimethyl-5alpha-cholesta-8,14,24-trien-3beta-ol + formate + oxidized [NADPH--hemoprotein reductase] + H2O + 2 H(+). The enzyme catalyses 24,25-dihydrolanosterol + reduced [NADPH--hemoprotein reductase] + O2 = 32-hydroxy-24,25-dihydrolanosterol + oxidized [NADPH--hemoprotein reductase] + H2O + H(+). The catalysed reaction is 32-hydroxy-24,25-dihydrolanosterol + reduced [NADPH--hemoprotein reductase] + O2 = 32-oxo-24,25-dihydrolanosterol + oxidized [NADPH--hemoprotein reductase] + 2 H2O + H(+). It catalyses the reaction 32-oxo-24,25-dihydrolanosterol + reduced [NADPH--hemoprotein reductase] + O2 = 4,4-dimethyl-8,14-cholestadien-3beta-ol + formate + oxidized [NADPH--hemoprotein reductase] + H2O + 2 H(+). It functions in the pathway steroid biosynthesis; zymosterol biosynthesis; zymosterol from lanosterol: step 1/6. With respect to regulation, inhibited by azalanstat. Inhibited by azole antifungal agents ketoconazole, itraconazole and fluconazole. Sterol 14alpha-demethylase that plays a critical role in the cholesterol biosynthesis pathway, being cholesterol the major sterol component in mammalian membranes as well as a precursor for bile acid and steroid hormone synthesis. Cytochrome P450 monooxygenase that catalyzes the three-step oxidative removal of the 14alpha-methyl group (C-32) of sterols such as lanosterol (lanosta-8,24-dien-3beta-ol) and 24,25-dihydrolanosterol (DHL) in the form of formate, and converts the sterols to 4,4-dimethyl-5alpha-cholesta-8,14,24-trien-3beta-ol and 4,4-dimethyl-8,14-cholestadien-3beta-ol, respectively, which are intermediates of cholesterol biosynthesis. Can also demethylate substrates not intrinsic to mammals, such as eburicol (24-methylene-24,25-dihydrolanosterol), but at a lower rate than DHL. This is Lanosterol 14-alpha demethylase from Macaca fascicularis (Crab-eating macaque).